Consider the following 265-residue polypeptide: Tryptophan synthase alpha chain (265 aa).

Active-site proton acceptor residues include Glu49 and Asp60.

The protein belongs to the TrpA family. As to quaternary structure, tetramer of two alpha and two beta chains.

It catalyses the reaction (1S,2R)-1-C-(indol-3-yl)glycerol 3-phosphate + L-serine = D-glyceraldehyde 3-phosphate + L-tryptophan + H2O. The protein operates within amino-acid biosynthesis; L-tryptophan biosynthesis; L-tryptophan from chorismate: step 5/5. In terms of biological role, the alpha subunit is responsible for the aldol cleavage of indoleglycerol phosphate to indole and glyceraldehyde 3-phosphate. The chain is Tryptophan synthase alpha chain from Cupriavidus metallidurans (strain ATCC 43123 / DSM 2839 / NBRC 102507 / CH34) (Ralstonia metallidurans).